The primary structure comprises 314 residues: uncharacterized protein (314 aa).

Residues 1–29 (MMRLIRTLPLRCFKTRIRRQGSLLCLRCF) constitute a mitochondrion transit peptide. The tract at residues 52–74 (SSSPLSKNKEKQEKPEKENEGKH) is disordered. Residues 58-74 (KNKEKQEKPEKENEGKH) are compositionally biased toward basic and acidic residues. The stretch at 177–207 (LNEHHLQLLKLKRELNSIHDELNEIIIDLLQ) forms a coiled coil. The chain crosses the membrane as a helical span at residues 262 to 279 (GLLVILVLVCSIMIGVSA). The tract at residues 281-314 (KKERPGLQEPEEPEILAPKEDIDTTFPQDQHDID) is disordered.

Its subcellular location is the mitochondrion membrane. This is an uncharacterized protein from Saccharomyces cerevisiae (strain ATCC 204508 / S288c) (Baker's yeast).